We begin with the raw amino-acid sequence, 155 residues long: Dau c 1 isoallergen Dau c 1.0401 (155 aa).

This sequence belongs to the BetVI family. Monomer. As to expression, expressed in roots (at protein level). Expressed in roots.

The sequence is that of Dau c 1 isoallergen Dau c 1.0401 from Daucus carota subsp. sativus (Carrot).